Reading from the N-terminus, the 56-residue chain is uncharacterized protein (56 aa).

This is an uncharacterized protein from Streptomyces lividans.